Reading from the N-terminus, the 264-residue chain is Thymidylate synthase (264 aa).

Arginine 21 provides a ligand contact to dUMP. Histidine 51 lines the (6R)-5,10-methylene-5,6,7,8-tetrahydrofolate pocket. DUMP is bound at residue 126–127 (RR). The Nucleophile role is filled by cysteine 146. DUMP-binding positions include 166–169 (RSGD), asparagine 177, and 207–209 (HLY). Residue aspartate 169 coordinates (6R)-5,10-methylene-5,6,7,8-tetrahydrofolate. A (6R)-5,10-methylene-5,6,7,8-tetrahydrofolate-binding site is contributed by alanine 263.

It belongs to the thymidylate synthase family. Bacterial-type ThyA subfamily. In terms of assembly, homodimer.

It is found in the cytoplasm. It carries out the reaction dUMP + (6R)-5,10-methylene-5,6,7,8-tetrahydrofolate = 7,8-dihydrofolate + dTMP. Its pathway is pyrimidine metabolism; dTTP biosynthesis. In terms of biological role, catalyzes the reductive methylation of 2'-deoxyuridine-5'-monophosphate (dUMP) to 2'-deoxythymidine-5'-monophosphate (dTMP) while utilizing 5,10-methylenetetrahydrofolate (mTHF) as the methyl donor and reductant in the reaction, yielding dihydrofolate (DHF) as a by-product. This enzymatic reaction provides an intracellular de novo source of dTMP, an essential precursor for DNA biosynthesis. The protein is Thymidylate synthase of Xanthomonas oryzae pv. oryzae (strain MAFF 311018).